A 262-amino-acid polypeptide reads, in one-letter code: Glutamate racemase (262 aa).

Substrate-binding positions include 10–11 and 42–43; these read DS and FG. Cysteine 74 serves as the catalytic Proton donor/acceptor. 75-76 contacts substrate; it reads NT. Cysteine 189 serves as the catalytic Proton donor/acceptor. 190–191 contacts substrate; sequence TH.

Belongs to the aspartate/glutamate racemases family.

The enzyme catalyses L-glutamate = D-glutamate. The protein operates within cell wall biogenesis; peptidoglycan biosynthesis. Its function is as follows. Provides the (R)-glutamate required for cell wall biosynthesis. The polypeptide is Glutamate racemase (Mesorhizobium japonicum (strain LMG 29417 / CECT 9101 / MAFF 303099) (Mesorhizobium loti (strain MAFF 303099))).